An 87-amino-acid polypeptide reads, in one-letter code: NAD(P)H-quinone oxidoreductase subunit O (87 aa).

Residues 1-10 show a composition bias toward basic and acidic residues; that stretch reads MSEQTGKVDD. Residues 1-26 form a disordered region; the sequence is MSEQTGKVDDSQSPPKVQKKLRKGDL.

This sequence belongs to the complex I NdhO subunit family. As to quaternary structure, NDH-1 can be composed of about 15 different subunits; different subcomplexes with different compositions have been identified which probably have different functions.

The protein resides in the cellular thylakoid membrane. It catalyses the reaction a plastoquinone + NADH + (n+1) H(+)(in) = a plastoquinol + NAD(+) + n H(+)(out). The enzyme catalyses a plastoquinone + NADPH + (n+1) H(+)(in) = a plastoquinol + NADP(+) + n H(+)(out). Functionally, NDH-1 shuttles electrons from an unknown electron donor, via FMN and iron-sulfur (Fe-S) centers, to quinones in the respiratory and/or the photosynthetic chain. The immediate electron acceptor for the enzyme in this species is believed to be plastoquinone. Couples the redox reaction to proton translocation, and thus conserves the redox energy in a proton gradient. Cyanobacterial NDH-1 also plays a role in inorganic carbon-concentration. This chain is NAD(P)H-quinone oxidoreductase subunit O, found in Prochlorococcus marinus (strain NATL1A).